The sequence spans 283 residues: Bifunctional protein FolD (283 aa).

NADP(+)-binding positions include 163 to 165 (GRS), S188, and I229.

The protein belongs to the tetrahydrofolate dehydrogenase/cyclohydrolase family. In terms of assembly, homodimer.

It catalyses the reaction (6R)-5,10-methylene-5,6,7,8-tetrahydrofolate + NADP(+) = (6R)-5,10-methenyltetrahydrofolate + NADPH. It carries out the reaction (6R)-5,10-methenyltetrahydrofolate + H2O = (6R)-10-formyltetrahydrofolate + H(+). The protein operates within one-carbon metabolism; tetrahydrofolate interconversion. Its function is as follows. Catalyzes the oxidation of 5,10-methylenetetrahydrofolate to 5,10-methenyltetrahydrofolate and then the hydrolysis of 5,10-methenyltetrahydrofolate to 10-formyltetrahydrofolate. This chain is Bifunctional protein FolD, found in Campylobacter fetus subsp. fetus (strain 82-40).